The following is a 191-amino-acid chain: 3-isopropylmalate dehydratase small subunit (191 aa).

The protein belongs to the LeuD family. LeuD type 1 subfamily. In terms of assembly, heterodimer of LeuC and LeuD.

The enzyme catalyses (2R,3S)-3-isopropylmalate = (2S)-2-isopropylmalate. It functions in the pathway amino-acid biosynthesis; L-leucine biosynthesis; L-leucine from 3-methyl-2-oxobutanoate: step 2/4. Functionally, catalyzes the isomerization between 2-isopropylmalate and 3-isopropylmalate, via the formation of 2-isopropylmaleate. The sequence is that of 3-isopropylmalate dehydratase small subunit from Anaeromyxobacter dehalogenans (strain 2CP-1 / ATCC BAA-258).